The sequence spans 253 residues: Triosephosphate isomerase, cytosolic (253 aa).

The substrate site is built by N10 and K12. The Electrophile role is filled by H96. The active-site Proton acceptor is E166.

Belongs to the triosephosphate isomerase family. In terms of assembly, homodimer.

The protein localises to the cytoplasm. The catalysed reaction is D-glyceraldehyde 3-phosphate = dihydroxyacetone phosphate. The protein operates within carbohydrate biosynthesis; gluconeogenesis. It functions in the pathway carbohydrate degradation; glycolysis; D-glyceraldehyde 3-phosphate from glycerone phosphate: step 1/1. The sequence is that of Triosephosphate isomerase, cytosolic from Secale cereale (Rye).